The following is a 311-amino-acid chain: tRNA-cytidine(32) 2-sulfurtransferase (311 aa).

The short motif at 47–52 (SGGKDS) is the PP-loop motif element. Residues C122, C125, and C213 each contribute to the [4Fe-4S] cluster site.

This sequence belongs to the TtcA family. In terms of assembly, homodimer. The cofactor is Mg(2+). Requires [4Fe-4S] cluster as cofactor.

It localises to the cytoplasm. It catalyses the reaction cytidine(32) in tRNA + S-sulfanyl-L-cysteinyl-[cysteine desulfurase] + AH2 + ATP = 2-thiocytidine(32) in tRNA + L-cysteinyl-[cysteine desulfurase] + A + AMP + diphosphate + H(+). It participates in tRNA modification. Functionally, catalyzes the ATP-dependent 2-thiolation of cytidine in position 32 of tRNA, to form 2-thiocytidine (s(2)C32). The sulfur atoms are provided by the cysteine/cysteine desulfurase (IscS) system. The sequence is that of tRNA-cytidine(32) 2-sulfurtransferase from Salmonella choleraesuis (strain SC-B67).